We begin with the raw amino-acid sequence, 211 residues long: Imidazole glycerol phosphate synthase subunit HisH (211 aa).

The Glutamine amidotransferase type-1 domain maps to 1-206; it reads MIGIIDYGRG…GKWVNEDATV (206 aa). Cys79 functions as the Nucleophile in the catalytic mechanism. Catalysis depends on residues His181 and Glu183.

In terms of assembly, heterodimer of HisH and HisF.

The protein resides in the cytoplasm. The enzyme catalyses 5-[(5-phospho-1-deoxy-D-ribulos-1-ylimino)methylamino]-1-(5-phospho-beta-D-ribosyl)imidazole-4-carboxamide + L-glutamine = D-erythro-1-(imidazol-4-yl)glycerol 3-phosphate + 5-amino-1-(5-phospho-beta-D-ribosyl)imidazole-4-carboxamide + L-glutamate + H(+). The catalysed reaction is L-glutamine + H2O = L-glutamate + NH4(+). Its pathway is amino-acid biosynthesis; L-histidine biosynthesis; L-histidine from 5-phospho-alpha-D-ribose 1-diphosphate: step 5/9. In terms of biological role, IGPS catalyzes the conversion of PRFAR and glutamine to IGP, AICAR and glutamate. The HisH subunit catalyzes the hydrolysis of glutamine to glutamate and ammonia as part of the synthesis of IGP and AICAR. The resulting ammonia molecule is channeled to the active site of HisF. This Desulfitobacterium hafniense (strain Y51) protein is Imidazole glycerol phosphate synthase subunit HisH.